A 475-amino-acid chain; its full sequence is GDP-fucose protein O-fucosyltransferase 3 (475 aa).

Residues 1–8 (MVRMRRKR) lie on the Cytoplasmic side of the membrane. A helical; Signal-anchor for type II membrane protein transmembrane segment spans residues 9-29 (LWASCICFAAFFFLLVTLQVI). The Lumenal segment spans residues 30–475 (TELGNSENKA…QEFWMLVFKQ (446 aa)). N-linked (GlcNAc...) asparagine glycans are attached at residues asparagine 107, asparagine 165, and asparagine 315. Cysteine 386 and cysteine 389 form a disulfide bridge. Residue asparagine 462 is glycosylated (N-linked (GlcNAc...) asparagine).

The protein belongs to the glycosyltransferase 10 family.

Its subcellular location is the endoplasmic reticulum membrane. It carries out the reaction L-threonyl-[protein] + GDP-beta-L-fucose = 3-O-(alpha-L-fucosyl)-L-threonyl-[protein] + GDP + H(+). The enzyme catalyses L-seryl-[protein] + GDP-beta-L-fucose = 3-O-(alpha-L-fucosyl)-L-seryl-[protein] + GDP + H(+). It functions in the pathway protein modification; protein glycosylation. Its function is as follows. Protein O-fucosyltransferase that specifically catalyzes O-fucosylation of serine or threonine residues in EMI domains of target proteins. Attaches fucose through an O-glycosidic linkage. O-fucosylation of EMI domain-containing proteins may be required for facilitating protein folding and secretion. The protein is GDP-fucose protein O-fucosyltransferase 3 (FUT10) of Gallus gallus (Chicken).